Consider the following 385-residue polypeptide: tRNA pseudouridine synthase D (385 aa).

Asp-86 functions as the Nucleophile in the catalytic mechanism. Positions 165 to 305 (GFPNYFGNQR…TRFLQKDIAP (141 aa)) constitute a TRUD domain.

This sequence belongs to the pseudouridine synthase TruD family.

The catalysed reaction is uridine(13) in tRNA = pseudouridine(13) in tRNA. Its function is as follows. Responsible for synthesis of pseudouridine from uracil-13 in transfer RNAs. The protein is tRNA pseudouridine synthase D of Helicobacter hepaticus (strain ATCC 51449 / 3B1).